We begin with the raw amino-acid sequence, 148 residues long: MKQNVFFLIAYFSLVFCMCNAVSHFKNCADKQLSDDKPLQCKIRNLQVDGNMPKVKEYMNCAFESSGWAKDGGKKLDTSKVAQDMVPYGFNIKTELDEVTKECETEFGAEISSIDYLACLLIDEKTKTQFKTMLMMKEADFFKQNLCN.

The first 21 residues, Met-1–Ala-21, serve as a signal peptide directing secretion. Cystine bridges form between Cys-28-Cys-61, Cys-41-Cys-147, and Cys-103-Cys-119.

The protein belongs to the PBP/GOBP family. Female salivary gland.

The protein localises to the secreted. Functionally, in contrast to the related D7 salivary proteins that can bind biogenic amines, does not bind serotonin. The protein is Short form salivary protein D7S1 of Aedes aegypti (Yellowfever mosquito).